Here is a 601-residue protein sequence, read N- to C-terminus: Kelch repeat and BTB domain-containing protein 8 (601 aa).

The segment at 1–25 (MAASADLSKSSPTPNGIPSSDPASD) is disordered. Over residues 7-22 (LSKSSPTPNGIPSSDP) the composition is skewed to polar residues. Positions 49–117 (TDIVVEVDHG…AYTSRVILTE (69 aa)) constitute a BTB domain. Positions 153 to 252 (IGVFIFADHY…PLMEDTFIEK (100 aa)) constitute a BACK domain. 5 Kelch repeats span residues 336 to 390 (DIYI…YCCG), 391 to 441 (KMYA…EYKE), 443 to 481 (IYVL…VYKD), 483 to 532 (IYYI…LFQN), and 542 to 588 (QVTV…FECA).

This sequence belongs to the KBTBD8 family. As to quaternary structure, component of the BCR(KBTBD8) E3 ubiquitin ligase complex, at least composed of CUL3, KBTBD8 and RBX1.

The protein resides in the cytoplasm. Its subcellular location is the cytoskeleton. The protein localises to the spindle. It is found in the golgi apparatus. Functionally, substrate-specific adapter of a BCR (BTB-CUL3-RBX1) E3 ubiquitin ligase complex that acts as a regulator of neural crest specification. The BCR(KBTBD8) complex acts by mediating monoubiquitination of NOLC1 and TCOF1: monoubiquitination promotes the formation of a NOLC1-TCOF1 complex that acts as a platform to connect RNA polymerase I with enzymes responsible for ribosomal processing and modification, leading to remodel the translational program of differentiating cells in favor of neural crest specification. This Homo sapiens (Human) protein is Kelch repeat and BTB domain-containing protein 8 (KBTBD8).